A 145-amino-acid chain; its full sequence is Large ribosomal subunit protein uL15 (145 aa).

The interval 1–52 (MKLNTIAPAEGSKKDRRRVGRGIGSGFGKTAGRGHKGQHARSGGYHKVGFEG) is disordered. Positions 21-31 (RGIGSGFGKTA) are enriched in gly residues.

Belongs to the universal ribosomal protein uL15 family. Part of the 50S ribosomal subunit.

Its function is as follows. Binds to the 23S rRNA. This Acidithiobacillus ferrooxidans (strain ATCC 53993 / BNL-5-31) (Leptospirillum ferrooxidans (ATCC 53993)) protein is Large ribosomal subunit protein uL15.